A 386-amino-acid polypeptide reads, in one-letter code: Cytochrome b (386 aa).

A run of 4 helical transmembrane segments spans residues 32-52 (LGSLLGLCLVIQIASGIFLAM), 76-98 (YLIRYIHANGASFFFVCMYAHIG), 113-133 (VWVIGVVIFIITMATAFLGYC), and 179-199 (FFALHYLCPFILAALVIMHLM). The heme b site is built by H82 and H96. Heme b contacts are provided by H183 and H197. An a ubiquinone-binding site is contributed by H202. Helical transmembrane passes span 225 to 245 (FVFKDLVTVFVFLLIFSLFVF), 289 to 309 (LGGVIAMFAAILILLVLPVTD), 321 to 341 (ISKTFFFLFLYNFILLGQLGQ), and 348 to 368 (FIQLGQFATLNYFLYFIFIVP).

This sequence belongs to the cytochrome b family. As to quaternary structure, fungal cytochrome b-c1 complex contains 10 subunits; 3 respiratory subunits, 2 core proteins and 5 low-molecular weight proteins. Cytochrome b-c1 complex is a homodimer. It depends on heme b as a cofactor.

The protein localises to the mitochondrion inner membrane. Component of the ubiquinol-cytochrome c reductase complex (complex III or cytochrome b-c1 complex) that is part of the mitochondrial respiratory chain. The b-c1 complex mediates electron transfer from ubiquinol to cytochrome c. Contributes to the generation of a proton gradient across the mitochondrial membrane that is then used for ATP synthesis. The protein is Cytochrome b (COB) of Wickerhamomyces canadensis (Yeast).